Reading from the N-terminus, the 622-residue chain is E3 ubiquitin-protein ligase RNF12-A (622 aa).

Disordered stretches follow at residues 1–26 (MESA…MDRL), 67–386 (RLQQ…ESER), and 473–514 (NANA…NSRG). Residues 11–21 (SIEQSESQRQS) show a composition bias toward low complexity. Composition is skewed to polar residues over residues 110–138 (SVRQ…NPNS) and 147–163 (INVN…SLDQ). Positions 216–242 (RSPDQRRTRARTDRSRSPLHHAVDPPI) are enriched in basic and acidic residues. The segment covering 247–256 (HSSSQTVDTS) has biased composition (polar residues). Residues 272 to 289 (SSQVQNSSSSNETEGSSR) show a composition bias toward low complexity. The segment covering 300–317 (VLGTEGQSQSTVHLSNPE) has biased composition (polar residues). A compositionally biased stretch (low complexity) spans 318-331 (TRSSSQTPQTDSST). Positions 332-341 (NAETTGTGQR) are enriched in polar residues. Over residues 355–365 (RPGDYRQRDSI) the composition is skewed to basic and acidic residues. Positions 366–382 (ANRTRSRSQTPNNTVTY) are enriched in polar residues. The RING-type; atypical zinc finger occupies 568–609 (CSVCITEYTEGNKLRKLPCSHEYHIHCIDRWLSENSTCPICR). Positions 619–622 (ESIV) match the PDZ-binding motif.

Belongs to the RNF12 family. Forms homodimers through the C-terminal region. The N-terminus interacts with the homeobox of LIM/homeobox factor lhx1/lim1, with lhx3/lim3 and lhx5/lim5, and with the N-terminus of ldb1. As to expression, shows overlapping expression with lhx1/lim1 and ldb1 in the gastrula mesoderm, and expression overlaps with ldb1 throughout early embryogenesis. After gastrulation, expression is gradually restricted to tissues originated from the ectoderm, the neuroectoderm, neural crest and epidermis, and subsequently to the neural tube as well as the head and tailbud region.

The protein resides in the nucleus. The enzyme catalyses S-ubiquitinyl-[E2 ubiquitin-conjugating enzyme]-L-cysteine + [acceptor protein]-L-lysine = [E2 ubiquitin-conjugating enzyme]-L-cysteine + N(6)-ubiquitinyl-[acceptor protein]-L-lysine.. The protein operates within protein modification; protein ubiquitination. Functionally, acts as an E3 ubiquitin-protein ligase specific for ldb1, mediating ubiquitination and proteasome-dependent degradation of excess ldb1 in a RING-dependent manner. Does not degrade ldb1 bound to lhx1/lim1, nor lim1 itself and thus contributes to the establishment of proper ldb1-lhx1/lim1 stoichiometry and the formation of a ldb1-lhx1/lim1 complex. Interferes with Spemann organizer function and suppresses secondary axis formation induced by ldb1 and lhx1/lim1. This Xenopus laevis (African clawed frog) protein is E3 ubiquitin-protein ligase RNF12-A (rnf12-a).